A 753-amino-acid polypeptide reads, in one-letter code: 5-methyltetrahydropteroyltriglutamate--homocysteine methyltransferase (753 aa).

5-methyltetrahydropteroyltri-L-glutamate is bound by residues 17–20 and Lys-117; that span reads RELK. L-homocysteine contacts are provided by residues 431–433 and Glu-484; that span reads IGS. Residues 431 to 433 and Glu-484 each bind L-methionine; that span reads IGS. 5-methyltetrahydropteroyltri-L-glutamate contacts are provided by residues 515 to 516 and Trp-561; that span reads RC. Asp-599 contributes to the L-homocysteine binding site. L-methionine is bound at residue Asp-599. Glu-605 is a binding site for 5-methyltetrahydropteroyltri-L-glutamate. Residues His-641, Cys-643, and Glu-665 each contribute to the Zn(2+) site. His-694 serves as the catalytic Proton donor. Zn(2+) is bound at residue Cys-726.

Belongs to the vitamin-B12 independent methionine synthase family. It depends on Zn(2+) as a cofactor.

The catalysed reaction is 5-methyltetrahydropteroyltri-L-glutamate + L-homocysteine = tetrahydropteroyltri-L-glutamate + L-methionine. It participates in amino-acid biosynthesis; L-methionine biosynthesis via de novo pathway; L-methionine from L-homocysteine (MetE route): step 1/1. Its function is as follows. Catalyzes the transfer of a methyl group from 5-methyltetrahydrofolate to homocysteine resulting in methionine formation. The sequence is that of 5-methyltetrahydropteroyltriglutamate--homocysteine methyltransferase from Shigella sonnei (strain Ss046).